A 390-amino-acid polypeptide reads, in one-letter code: 23S rRNA (uracil(747)-C(5))-methyltransferase RlmC (390 aa).

[4Fe-4S] cluster is bound by residues Cys-12, Cys-20, Cys-23, and Cys-100. Residues Gln-225, Phe-254, Glu-275, and Asn-322 each contribute to the S-adenosyl-L-methionine site. Catalysis depends on Cys-349, which acts as the Nucleophile.

Belongs to the class I-like SAM-binding methyltransferase superfamily. RNA M5U methyltransferase family. RlmC subfamily.

It carries out the reaction uridine(747) in 23S rRNA + S-adenosyl-L-methionine = 5-methyluridine(747) in 23S rRNA + S-adenosyl-L-homocysteine + H(+). Functionally, catalyzes the formation of 5-methyl-uridine at position 747 (m5U747) in 23S rRNA. In Shewanella baltica (strain OS223), this protein is 23S rRNA (uracil(747)-C(5))-methyltransferase RlmC.